Reading from the N-terminus, the 430-residue chain is Serine--tRNA ligase (430 aa).

The segment at 44–65 is disordered; sequence TESLQAERNSRSKSIGAAKARG. Residue 237-239 coordinates L-serine; that stretch reads TAE. 268–270 lines the ATP pocket; the sequence is RSE. Residue glutamate 291 participates in L-serine binding. Position 355–358 (355–358) interacts with ATP; it reads EISS. Serine 391 contributes to the L-serine binding site.

The protein belongs to the class-II aminoacyl-tRNA synthetase family. Type-1 seryl-tRNA synthetase subfamily. In terms of assembly, homodimer. The tRNA molecule binds across the dimer.

It is found in the cytoplasm. The enzyme catalyses tRNA(Ser) + L-serine + ATP = L-seryl-tRNA(Ser) + AMP + diphosphate + H(+). The catalysed reaction is tRNA(Sec) + L-serine + ATP = L-seryl-tRNA(Sec) + AMP + diphosphate + H(+). Its pathway is aminoacyl-tRNA biosynthesis; selenocysteinyl-tRNA(Sec) biosynthesis; L-seryl-tRNA(Sec) from L-serine and tRNA(Sec): step 1/1. Catalyzes the attachment of serine to tRNA(Ser). Is also able to aminoacylate tRNA(Sec) with serine, to form the misacylated tRNA L-seryl-tRNA(Sec), which will be further converted into selenocysteinyl-tRNA(Sec). This chain is Serine--tRNA ligase, found in Edwardsiella ictaluri (strain 93-146).